The following is a 66-amino-acid chain: Alpha-conotoxin RegIIA (66 aa).

Positions 1 to 21 are cleaved as a signal peptide; the sequence is MGMRMMFTVFLLVVLTTTVVS. The propeptide occupies 22–49; the sequence is STSVRASDGRNAAADNRASDLIAQIVRR. 2 disulfides stabilise this stretch: cysteine 51–cysteine 57 and cysteine 52–cysteine 65. Residues 53-55 are ser-Xaa-Pro motif, crucial for potent interaction with nAChR; that stretch reads SHP. A Cysteine amide modification is found at cysteine 65.

The protein belongs to the conotoxin A superfamily. In terms of tissue distribution, expressed by the venom duct.

The protein localises to the secreted. In terms of biological role, alpha-conotoxins act on postsynaptic membranes, they bind to the nicotinic acetylcholine receptors (nAChR) and thus inhibit them. This toxin potently inhibits alpha-3 containing subunit nAChR. It inhibits alpha-3-beta-2/CHRNA3-CHRNB2 (IC(50)=10.7-33 nM (rat)/132.4-704.1 nM (human)) and alpha-3-beta-4/CHRNA3-CHRNB4 (IC(50)=47.3-97 nM (rat)/52.1 nM (human)). It also inhibits alpha-7/CHRNA7 nAChR with IC(50)=103-210 nM (human)/41-61.2 nM (rat) nAChRs. It is more potent on alpha-3-beta-2 receptors in human than in rat, due to a variation (Pro vs Gln) in alpha-3 subunit in these orthologs. Conversely, does not show species-specific differences in sensitivity at the alpha-3-beta-4 receptor. This Conus regius (Crown cone) protein is Alpha-conotoxin RegIIA.